A 397-amino-acid chain; its full sequence is 4-hydroxybenzoate polyprenyltransferase, mitochondrial (397 aa).

The transit peptide at 1-14 (MFAVRHLLKSRKHF) directs the protein to the mitochondrion. Helical transmembrane passes span 96–116 (IGTYLLFWPCAWSIALSADAG), 121–141 (LTMLGLFGTGALIMRGAGCTI), 169–189 (FDAIVFLSAQLSLGLLVLVQL), 190–210 (NWQSILLGASSLGLVITYPLM), 213–233 (VTYWPQLVLGMAFNWGALLGW), 242–262 (LAACLPLYLSGVCWTIVYDTI), 289–309 (VWLSGFTAAMLTGLSTAGWAC), 313–333 (LPYYAAVGVVGAHLVQQIYSL), and 345–365 (FLSNHQVGLILFLGIVLGTLL).

The protein belongs to the UbiA prenyltransferase family. The cofactor is Mg(2+).

Its subcellular location is the mitochondrion inner membrane. The catalysed reaction is an all-trans-polyprenyl diphosphate + 4-hydroxybenzoate = a 4-hydroxy-3-(all-trans-polyprenyl)benzoate + diphosphate. It functions in the pathway cofactor biosynthesis; ubiquinone biosynthesis. Its function is as follows. Catalyzes the prenylation of para-hydroxybenzoate (PHB) with an all-trans polyprenyl group. Mediates the second step in the final reaction sequence of coenzyme Q (CoQ) biosynthesis, which is the condensation of the polyisoprenoid side chain with PHB, generating the first membrane-bound Q intermediate. This Drosophila pseudoobscura pseudoobscura (Fruit fly) protein is 4-hydroxybenzoate polyprenyltransferase, mitochondrial.